The following is a 169-amino-acid chain: Peptide methionine sulfoxide reductase MsrA (169 aa).

Cys-10 is an active-site residue.

It belongs to the MsrA Met sulfoxide reductase family.

It carries out the reaction L-methionyl-[protein] + [thioredoxin]-disulfide + H2O = L-methionyl-(S)-S-oxide-[protein] + [thioredoxin]-dithiol. The catalysed reaction is [thioredoxin]-disulfide + L-methionine + H2O = L-methionine (S)-S-oxide + [thioredoxin]-dithiol. Functionally, has an important function as a repair enzyme for proteins that have been inactivated by oxidation. Catalyzes the reversible oxidation-reduction of methionine sulfoxide in proteins to methionine. This chain is Peptide methionine sulfoxide reductase MsrA, found in Streptococcus pyogenes serotype M2 (strain MGAS10270).